A 2033-amino-acid chain; its full sequence is Envoplakin (2033 aa).

Over residues Met-1–Ser-27 the composition is skewed to low complexity. Disordered stretches follow at residues Met-1 to Gln-37 and Gln-65 to Arg-85. The interval Met-1 to Pro-841 is globular 1. Residues Lys-12–Pro-28 form a 4 X 4 AA tandem repeats of K-G-S-P region. Residues Ser-71–Gly-84 are compositionally biased toward polar residues. The stretch at Tyr-229–Gln-330 is one Spectrin repeat. A compositionally biased stretch (basic and acidic residues) spans Thr-388 to Asp-401. Disordered regions lie at residues Thr-388–Val-418 and Ser-891–Ala-916. Residues Gln-413–Pro-470 form the SH3 domain. The interval Lys-842–Gln-1673 is central fibrous rod domain. Residues Arg-845 to Ile-1135 are a coiled coil. Residues Ser-891–Gln-902 are compositionally biased toward basic and acidic residues. A Plectin 1 repeat occupies Lys-1185–Gly-1226. Residue Ser-1575 is modified to Phosphoserine. Over residues Gln-1614 to Lys-1623 the composition is skewed to low complexity. Residues Gln-1614 to Gln-1636 are disordered. Residues Glu-1674–Arg-2033 are globular 2. The Plectin 2 repeat unit spans residues Arg-1678–Tyr-1713. At Ser-1799 the chain carries Phosphoserine. Plectin repeat units follow at residues Leu-1818–Gly-1855, Gln-1856–Thr-1893, Gln-1894–Val-1931, Leu-1932–Ala-1969, and Gln-1970–Gly-2007. Ser-2025 is subject to Phosphoserine.

Belongs to the plakin or cytolinker family. As to quaternary structure, may form a homodimer or a heterodimer with PPL. As to expression, exclusively expressed in stratified squamous epithelia.

Its subcellular location is the cell junction. It is found in the desmosome. The protein localises to the cornified envelope. The protein resides in the cytoplasm. It localises to the cytoskeleton. Functionally, component of the cornified envelope of keratinocytes. May link the cornified envelope to desmosomes and intermediate filaments. The protein is Envoplakin (EVPL) of Homo sapiens (Human).